Consider the following 336-residue polypeptide: Tryptophan--tRNA ligase (336 aa).

ATP is bound by residues 15-17 (QPT) and 24-25 (GN). The short motif at 16–25 (PTSDSLHLGN) is the 'HIGH' region element. Residue aspartate 141 coordinates L-tryptophan. Residues 153 to 155 (GED), isoleucine 192, and 201 to 205 (KMSKS) each bind ATP. Residues 201 to 205 (KMSKS) carry the 'KMSKS' region motif.

Belongs to the class-I aminoacyl-tRNA synthetase family. As to quaternary structure, homodimer.

It localises to the cytoplasm. The catalysed reaction is tRNA(Trp) + L-tryptophan + ATP = L-tryptophyl-tRNA(Trp) + AMP + diphosphate + H(+). Catalyzes the attachment of tryptophan to tRNA(Trp). In Mycobacterium tuberculosis (strain CDC 1551 / Oshkosh), this protein is Tryptophan--tRNA ligase.